Consider the following 35-residue polypeptide: Protein YbgU (35 aa).

The chain is Protein YbgU from Escherichia coli (strain K12).